We begin with the raw amino-acid sequence, 132 residues long: Snaclec bothroinsularin subunit alpha (132 aa).

Disulfide bonds link Cys-2-Cys-13, Cys-30-Cys-127, and Cys-102-Cys-119. In terms of domain architecture, C-type lectin spans Tyr-9–Lys-128.

The protein belongs to the snaclec family. As to quaternary structure, heterodimer of subunits alpha and beta; disulfide-linked. As to expression, expressed by the venom gland.

The protein resides in the secreted. Thrombin and prothrombin (F2) inhibitor. The IC(50) of thrombin-induced platelet aggregation and fibrinocoagulation is 62 and 35 nM, respectively. Its inhibitory activity is at least 10-fold lower than that observed for other thrombin inhibitors. The protein is Snaclec bothroinsularin subunit alpha of Bothrops insularis (Golden lancehead).